A 102-amino-acid polypeptide reads, in one-letter code: uncharacterized protein (102 aa).

The HTH cro/C1-type domain occupies L48–I102. A DNA-binding region (H-T-H motif) is located at residues L59–Q78.

This is an uncharacterized protein from Haemophilus influenzae (strain ATCC 51907 / DSM 11121 / KW20 / Rd).